Reading from the N-terminus, the 424-residue chain is Adenylosuccinate synthetase (424 aa).

GTP-binding positions include 12 to 18 (GDEGKGK) and 40 to 42 (GHT). The active-site Proton acceptor is the Asp-13. 2 residues coordinate Mg(2+): Asp-13 and Gly-40. IMP is bound by residues 13–16 (DEGK), 38–41 (NAGH), Thr-130, Arg-144, Asn-220, Thr-235, and Arg-299. Residue His-41 is the Proton donor of the active site. Substrate is bound at residue 295–301 (VTTGRRR). GTP is bound by residues Arg-301, 327–329 (KLD), and 412–414 (GTG).

The protein belongs to the adenylosuccinate synthetase family. In terms of assembly, homodimer. Mg(2+) serves as cofactor.

The protein resides in the cytoplasm. It carries out the reaction IMP + L-aspartate + GTP = N(6)-(1,2-dicarboxyethyl)-AMP + GDP + phosphate + 2 H(+). It functions in the pathway purine metabolism; AMP biosynthesis via de novo pathway; AMP from IMP: step 1/2. Plays an important role in the de novo pathway and in the salvage pathway of purine nucleotide biosynthesis. Catalyzes the first committed step in the biosynthesis of AMP from IMP. This Aspergillus flavus (strain ATCC 200026 / FGSC A1120 / IAM 13836 / NRRL 3357 / JCM 12722 / SRRC 167) protein is Adenylosuccinate synthetase.